Here is a 196-residue protein sequence, read N- to C-terminus: Small nuclear ribonucleoprotein-associated protein B (196 aa).

Residues 7-101 (AHSSRLANLI…ILSTVVEDKP (95 aa)) form the Sm domain. Residues 105–132 (KKERLVRDKKEKKQAQKQTKLRKEKEKK) carry the Nuclear localization signal motif. Positions 108–118 (RLVRDKKEKKQ) are enriched in basic and acidic residues. Residues 108-196 (RLVRDKKEKK…FQPPPGFKRK (89 aa)) are disordered. The span at 140-181 (NTANAKHTSSNSREIAQPSSSRYNGGNDNIGANRSRFNNEAP) shows a compositional bias: polar residues.

Belongs to the snRNP SmB/SmN family. Component of the Sm core complex, present in spliceosomal snRNP U1, U2, U4/U6 and U5. The core complex contains SMB1, SMD1, SMD2, SMD3, SME1, SMX3 and SMX2 (Sm proteins B, D1, D2, D3, E, F and G, respectively), and is probably a heptameric ring structure. SMB1 specifically interacts with SMD3. Belongs to the CWC complex (or CEF1-associated complex), a spliceosome sub-complex reminiscent of a late-stage spliceosome composed of the U2, U5 and U6 snRNAs and at least BUD13, BUD31, BRR2, CDC40, CEF1, CLF1, CUS1, CWC2, CWC15, CWC21, CWC22, CWC23, CWC24, CWC25, CWC27, ECM2, HSH155, IST3, ISY1, LEA1, MSL1, NTC20, PRP8, PRP9, PRP11, PRP19, PRP21, PRP22, PRP45, PRP46, SLU7, SMB1, SMD1, SMD2, SMD3, SMX2, SMX3, SNT309, SNU114, SPP2, SYF1, SYF2, RSE1 and YJU2. Component of the U4/U6-U5 tri-snRNP complex composed of the U4, U6 and U5 snRNAs and at least PRP3, PRP4, PRP6, PRP8, PRP18, PRP38, SNU13, SNU23, SNU66, SNU114, SPP381, SMB1, SMD1, SMD2, SMD3, SMX2, SMX3, LSM2, LSM3, LSM4, LSM5, LSM6, LSM7, LSM8, BRR2 and DIB1. Interacts with the trimethylguanosine synthase TGS1.

The protein resides in the nucleus. It localises to the cytoplasm. Its function is as follows. Plays a role in pre-mRNA splicing as a core component of the spliceosomal U1, U2, U4 and U5 small nuclear ribonucleoproteins (snRNPs), the building blocks of the spliceosome. This is Small nuclear ribonucleoprotein-associated protein B (SMB1) from Saccharomyces cerevisiae (strain ATCC 204508 / S288c) (Baker's yeast).